A 269-amino-acid chain; its full sequence is 5'-nucleotidase SurE (269 aa).

Positions 11, 12, 43, and 101 each coordinate a divalent metal cation.

This sequence belongs to the SurE nucleotidase family. It depends on a divalent metal cation as a cofactor.

Its subcellular location is the cytoplasm. It carries out the reaction a ribonucleoside 5'-phosphate + H2O = a ribonucleoside + phosphate. Its function is as follows. Nucleotidase that shows phosphatase activity on nucleoside 5'-monophosphates. The chain is 5'-nucleotidase SurE from Prochlorococcus marinus (strain MIT 9303).